A 476-amino-acid chain; its full sequence is Chromosomal replication initiator protein DnaA (476 aa).

A domain I, interacts with DnaA modulators region spans residues 1 to 87; that stretch reads MSDRSDPTHA…AGVSNFAIVV (87 aa). Residues 87–131 form a domain II region; that stretch reads VNPGIAQDAFAQHPEPAEQPYIETPTITAPTDNPGLPASPSRGDS. Positions 132–348 are domain III, AAA+ region; sequence RLNPKYGFDT…GTLIRVTAFA (217 aa). 4 residues coordinate ATP: G176, G178, K179, and T180. The domain IV, binds dsDNA stretch occupies residues 349–476; the sequence is SLNKTPVDLA…IKQNHRYGKM (128 aa).

This sequence belongs to the DnaA family. In terms of assembly, oligomerizes as a right-handed, spiral filament on DNA at oriC.

It is found in the cytoplasm. Its function is as follows. Plays an essential role in the initiation and regulation of chromosomal replication. ATP-DnaA binds to the origin of replication (oriC) to initiate formation of the DNA replication initiation complex once per cell cycle. Binds the DnaA box (a 9 base pair repeat at the origin) and separates the double-stranded (ds)DNA. Forms a right-handed helical filament on oriC DNA; dsDNA binds to the exterior of the filament while single-stranded (ss)DNA is stabiized in the filament's interior. The ATP-DnaA-oriC complex binds and stabilizes one strand of the AT-rich DNA unwinding element (DUE), permitting loading of DNA polymerase. After initiation quickly degrades to an ADP-DnaA complex that is not apt for DNA replication. Binds acidic phospholipids. In Clavibacter sepedonicus (Clavibacter michiganensis subsp. sepedonicus), this protein is Chromosomal replication initiator protein DnaA.